The following is a 147-amino-acid chain: 3-hydroxyacyl-[acyl-carrier-protein] dehydratase FabZ (147 aa).

His-51 is a catalytic residue.

It belongs to the thioester dehydratase family. FabZ subfamily.

The protein resides in the cytoplasm. It carries out the reaction a (3R)-hydroxyacyl-[ACP] = a (2E)-enoyl-[ACP] + H2O. Functionally, involved in unsaturated fatty acids biosynthesis. Catalyzes the dehydration of short chain beta-hydroxyacyl-ACPs and long chain saturated and unsaturated beta-hydroxyacyl-ACPs. The protein is 3-hydroxyacyl-[acyl-carrier-protein] dehydratase FabZ of Anaplasma marginale (strain Florida).